We begin with the raw amino-acid sequence, 754 residues long: Endothelin-converting enzyme 1 (754 aa).

The Cytoplasmic segment spans residues methionine 1–arginine 52. A Phosphothreonine modification is found at threonine 9. A helical; Signal-anchor for type II membrane protein membrane pass occupies residues leucine 53–isoleucine 73. The Extracellular segment spans residues glutamine 74–tryptophan 754. One can recognise a Peptidase M13 domain in the interval valine 82–tryptophan 754. 5 disulfide bridges follow: cysteine 83/cysteine 88, cysteine 106/cysteine 739, cysteine 114/cysteine 699, cysteine 169/cysteine 419, and cysteine 628/cysteine 751. Asparagine 150, asparagine 171, asparagine 194, asparagine 254, asparagine 300, asparagine 346, asparagine 367, and asparagine 523 each carry an N-linked (GlcNAc...) asparagine glycan. Residue histidine 591 participates in Zn(2+) binding. The active site involves glutamate 592. A Zn(2+)-binding site is contributed by histidine 595. N-linked (GlcNAc...) asparagine glycosylation is found at asparagine 616 and asparagine 635. Glutamate 651 is a binding site for Zn(2+). The Proton donor role is filled by aspartate 655.

It belongs to the peptidase M13 family. As to quaternary structure, homodimer; disulfide-linked. Interacts with PPP1R16B. Interacts with TSPAN8; this interaction recruits the endothelin converting enzyme ECE1 to tetraspanin-enriched microdomains and positively modulates its enzymatic activity. Requires Zn(2+) as cofactor.

The protein localises to the cell membrane. It carries out the reaction Hydrolysis of the 21-Trp-|-Val-22 bond in big endothelin to form endothelin 1.. With respect to regulation, inhibited by phosphoramidon. Converts big endothelin-1 to endothelin-1. The polypeptide is Endothelin-converting enzyme 1 (ECE1) (Bos taurus (Bovine)).